The primary structure comprises 373 residues: ADP-forming sulfoacetate-CoA ligase subunit SauC (373 aa).

One can recognise an ATP-grasp domain in the interval 9-249 (KEAFREKGLP…YLQFNGDIAL (241 aa)). 35–97 (FAEVGFPCVL…EEAVDIDREI (63 aa)) is an ATP binding site. Residues glutamate 186 and asparagine 188 each contribute to the Mg(2+) site.

This sequence belongs to the succinate/malate CoA ligase beta subunit family. As to quaternary structure, forms a complex with SauD. It depends on Mg(2+) as a cofactor.

It carries out the reaction sulfoacetate + ATP + CoA = sulfoacetyl-CoA + ADP + phosphate. Involved in the degradation of sulfoacetate. Catalyzes the CoA- and ATP-dependent conversion of sulfoacetate to sulfoacetyl-CoA and ADP. Cannot use other sulfonic and carboxylic acids, and shows only residual activity with 3-sulfopropanoate and malonic acid. The protein is ADP-forming sulfoacetate-CoA ligase subunit SauC of Bilophila wadsworthia (strain 3_1_6).